The chain runs to 363 residues: Copper-containing nitrite reductase (363 aa).

A signal peptide spans M1 to A24. Plastocyanin-like domains lie at G25–V193 and Y194–Q363. Cu cation is bound by residues H113, H118, H153, C154, H163, M168, and H324.

The protein belongs to the multicopper oxidase family. Homotrimer. Cu(2+) is required as a cofactor. Cu(+) serves as cofactor. Requires FAD as cofactor.

The protein resides in the periplasm. The enzyme catalyses nitric oxide + Fe(III)-[cytochrome c] + H2O = Fe(II)-[cytochrome c] + nitrite + 2 H(+). It participates in nitrogen metabolism; nitrate reduction (denitrification); dinitrogen from nitrate: step 2/4. The protein is Copper-containing nitrite reductase (nirK) of Pseudomonas chlororaphis (Pseudomonas aureofaciens).